Reading from the N-terminus, the 1068-residue chain is Self-sufficient cytochrome P450 monooxygenase CYP505U2 (1068 aa).

Residue Cys408 participates in heme binding. Residues 464–498 are disordered; the sequence is TTAGMVPESVQSLRQAQKSGKPGNSKSSANESMVG. The span at 472–498 shows a compositional bias: polar residues; sequence SVQSLRQAQKSGKPGNSKSSANESMVG. Positions 505–646 constitute a Flavodoxin-like domain; it reads VSIFYGSNSG…DLEKWEESIL (142 aa). FMN-binding positions include 511-515 and 590-622; these read SNSGS and VFGC…QRVA. The FAD-binding FR-type domain occupies 679–909; sequence KEFLEATVTS…RRSNPAFHPP (231 aa).

In the N-terminal section; belongs to the cytochrome P450 family. FAD is required as a cofactor. Requires FMN as cofactor. The cofactor is heme.

The catalysed reaction is 2 oxidized [cytochrome P450] + NADPH = 2 reduced [cytochrome P450] + NADP(+) + H(+). It carries out the reaction an organic molecule + reduced [NADPH--hemoprotein reductase] + O2 = an alcohol + oxidized [NADPH--hemoprotein reductase] + H2O + H(+). The enzyme catalyses dodecanoate + reduced [NADPH--hemoprotein reductase] + O2 = 3-hydroxydodecanoate + oxidized [NADPH--hemoprotein reductase] + H2O + H(+). It catalyses the reaction dodecanoate + reduced [NADPH--hemoprotein reductase] + O2 = 7-hydroxydodecanoate + oxidized [NADPH--hemoprotein reductase] + H2O + H(+). The catalysed reaction is dodecan-1-ol + reduced [NADPH--hemoprotein reductase] + O2 = 1,4-dodecanediol + oxidized [NADPH--hemoprotein reductase] + H2O + H(+). It carries out the reaction dodecan-1-ol + reduced [NADPH--hemoprotein reductase] + O2 = 1,3-dodecanediol + oxidized [NADPH--hemoprotein reductase] + H2O + H(+). Its function is as follows. Self-sufficient cytochrome P450 monooxygenase that catalyzes the regioselective in-chain hydroxylation of alkanes, fatty alcohols, and fatty acids. Preferentially hydroxylates 1-dodecanol at C3 and C4 (positions omega-8 and omega-9). It is very likely that CYP505U2 prefers dodecanol, and probably other fatty alcohols, over fatty acids as substrates. Does not show any significant activity toward tetradecanoic acid. The sequence is that of Self-sufficient cytochrome P450 monooxygenase CYP505U2 from Exserohilum turcicum (strain 28A) (Northern leaf blight fungus).